The following is a 355-amino-acid chain: Anthranilate phosphoribosyltransferase (355 aa).

5-phospho-alpha-D-ribose 1-diphosphate contacts are provided by residues glycine 99, glycine 102–aspartate 103, threonine 107, asparagine 109–threonine 112, lysine 127–serine 135, and serine 139. Glycine 99 is a binding site for anthranilate. Serine 111 provides a ligand contact to Mg(2+). Residue asparagine 130 coordinates anthranilate. Arginine 185 is an anthranilate binding site. Mg(2+) contacts are provided by aspartate 243 and glutamate 244.

The protein belongs to the anthranilate phosphoribosyltransferase family. In terms of assembly, homodimer. The cofactor is Mg(2+).

The enzyme catalyses N-(5-phospho-beta-D-ribosyl)anthranilate + diphosphate = 5-phospho-alpha-D-ribose 1-diphosphate + anthranilate. The protein operates within amino-acid biosynthesis; L-tryptophan biosynthesis; L-tryptophan from chorismate: step 2/5. Functionally, catalyzes the transfer of the phosphoribosyl group of 5-phosphorylribose-1-pyrophosphate (PRPP) to anthranilate to yield N-(5'-phosphoribosyl)-anthranilate (PRA). This is Anthranilate phosphoribosyltransferase from Pseudoalteromonas translucida (strain TAC 125).